The sequence spans 362 residues: Acetylglutamate kinase (362 aa).

The span at 1–11 (MNAPTRTPPPS) shows a compositional bias: pro residues. A disordered region spans residues 1-42 (MNAPTRTPPPSNGGHGSTGSTGSTGDAAPGGGTGRGPAATAR). Residues 106–107 (GG), arginine 128, and asparagine 227 contribute to the substrate site. The segment at 329 to 362 (MAESGTSPEPGTPPAPAARPAGIVPAGEPTGGTP) is disordered. Residues 346–355 (ARPAGIVPAG) are compositionally biased toward low complexity.

Belongs to the acetylglutamate kinase family. ArgB subfamily.

Its subcellular location is the cytoplasm. It carries out the reaction N-acetyl-L-glutamate + ATP = N-acetyl-L-glutamyl 5-phosphate + ADP. It functions in the pathway amino-acid biosynthesis; L-arginine biosynthesis; N(2)-acetyl-L-ornithine from L-glutamate: step 2/4. Its function is as follows. Catalyzes the ATP-dependent phosphorylation of N-acetyl-L-glutamate. This Frankia casuarinae (strain DSM 45818 / CECT 9043 / HFP020203 / CcI3) protein is Acetylglutamate kinase.